A 63-amino-acid polypeptide reads, in one-letter code: Overexpressed in colon carcinoma 1 protein homolog (63 aa).

Polar residues predominate over residues 1–10; that stretch reads MGCGNSTATS. Positions 1-39 are disordered; sequence MGCGNSTATSAAAGRGPTGAVKDTTEDSITEDDKRRNYG.

Belongs to the OCC1 family.

The chain is Overexpressed in colon carcinoma 1 protein homolog from Mus musculus (Mouse).